A 252-amino-acid polypeptide reads, in one-letter code: MNKVVVKNVTFGEGAPKICVPMVGKTVAALKEEAEMLQTIDLDVVEWRVDFFEDVKDLAKVEAALGEIRAILPETPILFTFRSAKEGGELAVSDEFYFELNETLAGTGKIDLVDVELFNEEADVLRLIETAHKNNVKVVMSNHDFDKTPAKEEIVSRLTRMEALGADLPKIAVMPKSAGDVLTLLDATNTVFEKANQPIITMSMAGTGVISRLAGEVFGSAMTFGAAKKASAPGQIDVNELRHVLDLLHKQF.

Residues 46-48 (EWR) and Arg-82 contribute to the 3-dehydroquinate site. The active-site Proton donor/acceptor is the His-143. Lys-170 serves as the catalytic Schiff-base intermediate with substrate. Arg-212, Ser-231, and Gln-235 together coordinate 3-dehydroquinate.

Belongs to the type-I 3-dehydroquinase family. Homodimer.

It carries out the reaction 3-dehydroquinate = 3-dehydroshikimate + H2O. It functions in the pathway metabolic intermediate biosynthesis; chorismate biosynthesis; chorismate from D-erythrose 4-phosphate and phosphoenolpyruvate: step 3/7. Involved in the third step of the chorismate pathway, which leads to the biosynthesis of aromatic amino acids. Catalyzes the cis-dehydration of 3-dehydroquinate (DHQ) and introduces the first double bond of the aromatic ring to yield 3-dehydroshikimate. The polypeptide is 3-dehydroquinate dehydratase (Listeria monocytogenes serovar 1/2a (strain ATCC BAA-679 / EGD-e)).